A 428-amino-acid polypeptide reads, in one-letter code: Nucleoside diphosphate phosphatase ENTPD5 (428 aa).

A signal peptide spans 1-24 (MATSWGTVFFMLVVSCVCSAVSHR). Glu172 acts as the Proton acceptor in catalysis. Asn232 is a glycosylation site (N-linked (GlcNAc...) asparagine). 2 disulfide bridges follow: Cys272–Cys303 and Cys363–Cys377. Asn368 carries an N-linked (GlcNAc...) asparagine glycan.

It belongs to the GDA1/CD39 NTPase family. In terms of assembly, monomer; active form. Homodimer; disulfide-linked. Homodimers are enzymatically inactive. The cofactor is Ca(2+). Mg(2+) is required as a cofactor. In terms of processing, N-glycosylated; high-mannose type. Glycosylation is not essential for enzymatic activity. Expressed in adult liver, kidney, prostate, testis and colon. Much weaker expression in other tissues.

The protein resides in the endoplasmic reticulum. Its subcellular location is the secreted. The enzyme catalyses a ribonucleoside 5'-diphosphate + H2O = a ribonucleoside 5'-phosphate + phosphate + H(+). It catalyses the reaction GDP + H2O = GMP + phosphate + H(+). It carries out the reaction UDP + H2O = UMP + phosphate + H(+). The catalysed reaction is IDP + H2O = IMP + phosphate + H(+). The enzyme catalyses CDP + H2O = CMP + phosphate + H(+). It catalyses the reaction ADP + H2O = AMP + phosphate + H(+). It functions in the pathway protein modification; protein glycosylation. Hydrolyzes nucleoside diphosphates with a preference for GDP, IDP and UDP compared to ADP and CDP. In the lumen of the endoplasmic reticulum, hydrolyzes UDP that acts as an end-product feedback inhibitor of the UDP-Glc:glycoprotein glucosyltransferases. UMP can be transported back by an UDP-sugar antiporter to the cytosol where it is consumed to regenerate UDP-glucose. Therefore, it positively regulates protein reglucosylation by clearing UDP from the ER lumen and by promoting the regeneration of UDP-glucose. Protein reglucosylation is essential to proper glycoprotein folding and quality control in the ER. This is Nucleoside diphosphate phosphatase ENTPD5 from Homo sapiens (Human).